Reading from the N-terminus, the 1457-residue chain is Ras guanine nucleotide exchange factor C (1457 aa).

One copy of the RCC1 1 repeat lies at 1–55 (MSVFTFGHGSNGALGLGKITDDTCPTPQKVNYFTEIDKRVKKVACGSYHTVFVTD). Disordered regions lie at residues 75–196 (FYTS…PLLN), 209–264 (HYES…RINK), 282–313 (EQQQ…DEDP), and 376–404 (QQQL…SLQT). Composition is skewed to low complexity over residues 83–121 (TTTT…KIVN) and 134–158 (SNTT…LPPT). Basic and acidic residues-rich tracts occupy residues 171–188 (IKLD…ELIQ) and 209–224 (HYES…KDNE). Acidic residues predominate over residues 225–237 (NENEEDEDDDDDD). Over residues 238 to 249 (STIRQNEDKESS) the composition is skewed to basic and acidic residues. Low complexity-rich tracts occupy residues 283–292 (QQQQPQQPQQ) and 376–403 (QQQL…SSLQ). 4 RCC1 repeats span residues 351–401 (GGNV…SSSS), 432–483 (WGEL…CYTE), 485–549 (GKMY…VLTQ), and 590–647 (SGEV…ALVE). The DH domain maps to 650–971 (PKTKLALQLV…QVLLERMNQN (322 aa)). The segment covering 703–715 (LPPSLKGLSGGLP) has biased composition (low complexity). The tract at residues 703–762 (LPPSLKGLSGGLPDNANNTIKNGKDKDNHHNGDSNGHHSNGHYHGNGNNGNNSITTSNSI) is disordered. Residues 724-738 (NGKDKDNHHNGDSNG) are compositionally biased toward basic and acidic residues. The span at 739-762 (HHSNGHYHGNGNNGNNSITTSNSI) shows a compositional bias: low complexity. Positions 989–1109 (GNPQIMGGSL…SVSQIKLQYF (121 aa)) constitute an N-terminal Ras-GEF domain. The tract at residues 1127–1210 (LTQNEITTPP…NNNNNNNNLT (84 aa)) is disordered. Residues 1138 to 1211 (LQIQNNNQNN…NNNNNNNLTN (74 aa)) adopt a coiled-coil conformation. The span at 1142-1210 (NNNQNNNLEN…NNNNNNNNLT (69 aa)) shows a compositional bias: low complexity. The 223-residue stretch at 1232-1454 (QPIEVAQTLT…DDKQAQKISS (223 aa)) folds into the Ras-GEF domain.

Promotes the exchange of Ras-bound GDP by GTP. The chain is Ras guanine nucleotide exchange factor C (gefC) from Dictyostelium discoideum (Social amoeba).